Reading from the N-terminus, the 382-residue chain is ATP phosphoribosyltransferase regulatory subunit (382 aa).

This sequence belongs to the class-II aminoacyl-tRNA synthetase family. HisZ subfamily. In terms of assembly, heteromultimer composed of HisG and HisZ subunits.

The protein localises to the cytoplasm. The protein operates within amino-acid biosynthesis; L-histidine biosynthesis; L-histidine from 5-phospho-alpha-D-ribose 1-diphosphate: step 1/9. Functionally, required for the first step of histidine biosynthesis. May allow the feedback regulation of ATP phosphoribosyltransferase activity by histidine. This chain is ATP phosphoribosyltransferase regulatory subunit, found in Burkholderia pseudomallei (strain 668).